The chain runs to 186 residues: NADH-ubiquinone oxidoreductase 17.8 kDa subunit, mitochondrial (186 aa).

A mitochondrion-targeting transit peptide spans 1–26 (MSSFRLGVSRVARQVRAPCVRNTRRY). The segment at 22–49 (NTRRYASDSHAPADHTHSAAGHGEHHHA) is disordered. A compositionally biased stretch (basic and acidic residues) spans 26 to 49 (YASDSHAPADHTHSAAGHGEHHHA). Residues 58–78 (LGTAFYVIFGAIPAFGALYYF) form a helical membrane-spanning segment.

As to quaternary structure, complex I is composed of about 40 different subunits.

Its subcellular location is the mitochondrion inner membrane. It carries out the reaction a ubiquinone + NADH + 5 H(+)(in) = a ubiquinol + NAD(+) + 4 H(+)(out). In terms of biological role, transfer of electrons from NADH to the respiratory chain. The immediate electron acceptor for the enzyme is believed to be ubiquinone. In Neurospora crassa (strain ATCC 24698 / 74-OR23-1A / CBS 708.71 / DSM 1257 / FGSC 987), this protein is NADH-ubiquinone oxidoreductase 17.8 kDa subunit, mitochondrial (nuo17.8).